The primary structure comprises 454 residues: Butyrophilin-like protein 2 (454 aa).

The Cytoplasmic portion of the chain corresponds to 1–6; that stretch reads MVDCPR. The helical; Signal-anchor for type II membrane protein transmembrane segment at 7-23 threads the bilayer; that stretch reads YSLSGVAASFLFVLLTI. The Extracellular portion of the chain corresponds to 24–454; sequence KHPDDFRVVG…KTARFPLSGW (431 aa). 4 consecutive Ig-like V-type domains span residues 27–140, 148–234, 244–355, and 365–452; these read DDFR…VLLQ, PNIH…ATIA, ASVS…ARVD, and PRIT…FPLS. Cystine bridges form between Cys50/Cys124, Cys164/Cys218, Cys267/Cys341, and Cys381/Cys435. N-linked (GlcNAc...) asparagine glycosylation is found at Asn210, Asn296, Asn427, and Asn432.

This sequence belongs to the immunoglobulin superfamily. BTN/MOG family. In terms of tissue distribution, highly expressed in intestine and at reduced levels in lung and stomach. Also expressed in thymus, spleen, lymph nodes, T-cells, B-cells, and macrophages.

The protein resides in the membrane. Functionally, negative regulator of T-cell proliferation. The polypeptide is Butyrophilin-like protein 2 (Mus musculus (Mouse)).